The following is an 88-amino-acid chain: Small ribosomal subunit protein bS16c (88 aa).

This sequence belongs to the bacterial ribosomal protein bS16 family.

The protein localises to the plastid. Its subcellular location is the chloroplast. In Gossypium barbadense (Sea Island cotton), this protein is Small ribosomal subunit protein bS16c.